The chain runs to 125 residues: Large ribosomal subunit protein bL12 (125 aa).

Belongs to the bacterial ribosomal protein bL12 family. As to quaternary structure, homodimer. Part of the ribosomal stalk of the 50S ribosomal subunit. Forms a multimeric L10(L12)X complex, where L10 forms an elongated spine to which 2 to 4 L12 dimers bind in a sequential fashion. Binds GTP-bound translation factors.

In terms of biological role, forms part of the ribosomal stalk which helps the ribosome interact with GTP-bound translation factors. Is thus essential for accurate translation. This is Large ribosomal subunit protein bL12 from Bradyrhizobium sp. (strain BTAi1 / ATCC BAA-1182).